We begin with the raw amino-acid sequence, 503 residues long: Transcriptional regulator LovE (503 aa).

The segment at residues 35–67 is a DNA-binding region (zn(2)-C6 fungal-type); sequence CDRCHAQKIKCTGNKEVTGRAPCQRCQQAGLRC. Disordered regions lie at residues 89 to 124 and 331 to 358; these read ADPD…RQFL and SHMS…HSSV. A compositionally biased stretch (low complexity) spans 339–357; it reads SRSQSPSRDDTSSSSGHSS.

The protein resides in the nucleus. In terms of biological role, transcription factor that regulates the expression of the he gene cluster that mediates the biosynthesis of lovastatin (also known as mevinolin, mevacor or monacolin K), a hypolipidemic inhibitor of (3S)-hydroxymethylglutaryl-coenzyme A (HMG-CoA) reductase (HMGR). The chain is Transcriptional regulator LovE from Aspergillus terreus.